Consider the following 42-residue polypeptide: Large ribosomal subunit protein bL36 (42 aa).

It belongs to the bacterial ribosomal protein bL36 family.

The chain is Large ribosomal subunit protein bL36 from Ehrlichia chaffeensis (strain ATCC CRL-10679 / Arkansas).